Consider the following 255-residue polypeptide: DASH complex subunit SPC34 (255 aa).

A disordered region spans residues 53–81; that stretch reads LFSVPPPPPRQTTLTAEQQQQQKPSNRRQ. Over residues 63-81 the composition is skewed to polar residues; the sequence is QTTLTAEQQQQQKPSNRRQ. The stretch at 176-248 forms a coiled coil; it reads LAYYEAKIAE…QARLRALDAD (73 aa).

The protein belongs to the DASH complex SPC34 family. In terms of assembly, component of the DASH complex consisting of ASK1, DAD1, DAD2, DAD3, DAD4, DAM1, DUO1, HSK3, SPC19 and SPC34, with a stoichiometry of one copy of each subunit per complex. Multiple DASH complexes oligomerize to form a ring that encircles spindle microtubules and organizes the rod-like NDC80 complexes of the outer kinetochore of the outer kinetochore. DASH complex oligomerization strengthens microtubule attachments. On cytoplasmic microtubules, DASH complexes appear to form patches instead of rings.

It is found in the nucleus. Its subcellular location is the cytoplasm. The protein resides in the cytoskeleton. It localises to the spindle. The protein localises to the chromosome. It is found in the centromere. Its subcellular location is the kinetochore. Its function is as follows. Component of the DASH complex that connects microtubules with kinetochores and couples microtubule depolymerisation to chromosome movement; it is involved in retrieving kinetochores to the spindle poles before their re-orientation on the spindle in early mitosis and allows microtubule depolymerization to pull chromosomes apart and resist detachment during anaphase. Kinetochores, consisting of a centromere-associated inner segment and a microtubule-contacting outer segment, play a crucial role in chromosome segregation by mediating the physical connection between centromeric DNA and microtubules. Kinetochores also serve as an input point for the spindle assembly checkpoint, which delays anaphase until all chromosomes have bioriented on the mitotic spindle. The polypeptide is DASH complex subunit SPC34 (Chaetomium thermophilum (strain DSM 1495 / CBS 144.50 / IMI 039719) (Thermochaetoides thermophila)).